Consider the following 364-residue polypeptide: Glycerol dehydrogenase (364 aa).

The NAD(+) site is built by aspartate 37, glycine 92, lysine 93, threonine 114, and serine 117. Aspartate 119 is a glycerol binding site. 3 residues coordinate NAD(+): serine 123, leucine 125, and tyrosine 129. Residues aspartate 169, histidine 252, and histidine 269 each contribute to the glycerol site. The Zn(2+) site is built by aspartate 169, histidine 252, and histidine 269.

Belongs to the iron-containing alcohol dehydrogenase family. Requires Zn(2+) as cofactor.

The catalysed reaction is glycerol + NAD(+) = dihydroxyacetone + NADH + H(+). Its pathway is polyol metabolism; glycerol fermentation; glycerone phosphate from glycerol (oxidative route): step 1/2. Catalyzes the NAD-dependent oxidation of glycerol to dihydroxyacetone (glycerone). This Thermotoga maritima (strain ATCC 43589 / DSM 3109 / JCM 10099 / NBRC 100826 / MSB8) protein is Glycerol dehydrogenase (gldA).